The chain runs to 314 residues: Adenosine receptor A3 (314 aa).

The Extracellular segment spans residues 1–14 (MAVNGTALLLANVT). Asn-4 and Asn-12 each carry an N-linked (GlcNAc...) asparagine glycan. A helical membrane pass occupies residues 15–37 (YITVEILIGLCAIVGNVLVIWVV). The Cytoplasmic portion of the chain corresponds to 38 to 48 (KLNPSLQTTTF). The chain crosses the membrane as a helical span at residues 49–72 (YFIVSLALADIAVGVLVMPLAIVI). Residues 73–84 (SLGITIQFYNCL) are Extracellular-facing. Cys-83 and Cys-166 are disulfide-bonded. The chain crosses the membrane as a helical span at residues 85–106 (FMTCLLLIFTHASIMSLLAIAV). Topologically, residues 107 to 126 (DRYLRVKLTVRYRRVTTQRR) are cytoplasmic. The helical transmembrane segment at 127 to 148 (IWLALGLCWLVSFLVGLTPMFG) threads the bilayer. Residues 149 to 177 (WNMKLTSEHQRNVTFLSCQFSSVMRMDYM) are Extracellular-facing. An N-linked (GlcNAc...) asparagine glycan is attached at Asn-160. Residues 178-198 (VYFSFFTWILIPLVVMCAIYL) traverse the membrane as a helical segment. Residues 199-231 (DIFYVIRNKLNQNFSSSKETGAFYGREFKTAKS) lie on the Cytoplasmic side of the membrane. A helical transmembrane segment spans residues 232–255 (LFLVLFLFAFSWLPLSIINCITYF). Residues 256 to 261 (HGEVPQ) are Extracellular-facing. Residues 262–284 (IILYLGILLSHANSMMNPIVYAY) traverse the membrane as a helical segment. Residues 285-314 (KIKKFKETYLLIFKTYMICQSSDSLDSSTE) lie on the Cytoplasmic side of the membrane. Cys-303 carries S-palmitoyl cysteine lipidation.

This sequence belongs to the G-protein coupled receptor 1 family.

It is found in the cell membrane. In terms of biological role, receptor for adenosine. The activity of this receptor is mediated by G proteins which inhibits adenylyl cyclase. The chain is Adenosine receptor A3 (ADORA3) from Canis lupus familiaris (Dog).